Consider the following 198-residue polypeptide: Ribonuclease HII (198 aa).

In terms of domain architecture, RNase H type-2 spans 10 to 198 (QLVAGVDEVG…PVKRALGLAS (189 aa)). Residues Asp16, Glu17, and Asp108 each coordinate a divalent metal cation.

Belongs to the RNase HII family. Mn(2+) is required as a cofactor. Requires Mg(2+) as cofactor.

It is found in the cytoplasm. The enzyme catalyses Endonucleolytic cleavage to 5'-phosphomonoester.. Functionally, endonuclease that specifically degrades the RNA of RNA-DNA hybrids. The sequence is that of Ribonuclease HII from Citrobacter koseri (strain ATCC BAA-895 / CDC 4225-83 / SGSC4696).